We begin with the raw amino-acid sequence, 259 residues long: Pimeloyl-[acyl-carrier protein] methyl ester esterase (259 aa).

Substrate-binding positions include tryptophan 18, 78 to 79, and 139 to 143; these read SL and FLALD. Residue serine 78 is the Nucleophile of the active site. Catalysis depends on residues aspartate 203 and histidine 231. Residue histidine 231 participates in substrate binding.

Belongs to the AB hydrolase superfamily. Carboxylesterase BioH family. As to quaternary structure, monomer.

It localises to the cytoplasm. It catalyses the reaction 6-carboxyhexanoyl-[ACP] methyl ester + H2O = 6-carboxyhexanoyl-[ACP] + methanol + H(+). The protein operates within cofactor biosynthesis; biotin biosynthesis. Its function is as follows. The physiological role of BioH is to remove the methyl group introduced by BioC when the pimeloyl moiety is complete. It allows to synthesize pimeloyl-ACP via the fatty acid synthetic pathway through the hydrolysis of the ester bonds of pimeloyl-ACP esters. This Stenotrophomonas maltophilia (strain R551-3) protein is Pimeloyl-[acyl-carrier protein] methyl ester esterase.